Here is a 210-residue protein sequence, read N- to C-terminus: Putative fructokinase-8 (210 aa).

It belongs to the carbohydrate kinase PfkB family.

It carries out the reaction D-fructose + ATP = D-fructose 6-phosphate + ADP + H(+). Its pathway is glycan biosynthesis; starch biosynthesis. In terms of biological role, may play an important role in maintaining the flux of carbon towards starch formation. This Arabidopsis thaliana (Mouse-ear cress) protein is Putative fructokinase-8.